A 269-amino-acid polypeptide reads, in one-letter code: Prespore protein Dd31 (269 aa).

The span at 1 to 17 shows a compositional bias: polar residues; sequence MEHNNNPGTPQMSSEFP. Positions 1–35 are disordered; that stretch reads MEHNNNPGTPQMSSEFPASTTQTSSSAAAYDNSSH. The segment covering 18–29 has biased composition (low complexity); that stretch reads ASTTQTSSSAAA. Transmembrane regions (helical) follow at residues 111 to 131, 139 to 159, 177 to 197, and 225 to 245; these read FGIFVFLWEAAALVYNWVVSI, VDNFFLALFYMIVGVPTLYFL, YAYLMALLGVVLFNIIFFVGF, and VSLFFWFVGVFLTIALFIMYL.

Belongs to the SCAMP family.

Its subcellular location is the membrane. The protein localises to the spore coat. This chain is Prespore protein Dd31 (spiA), found in Dictyostelium discoideum (Social amoeba).